Here is a 544-residue protein sequence, read N- to C-terminus: Chaperonin GroEL (544 aa).

ATP is bound by residues 29–32, 86–90, Gly-413, 476–478, and Asp-492; these read TLGP, DGTTT, and NAA.

The protein belongs to the chaperonin (HSP60) family. Forms a cylinder of 14 subunits composed of two heptameric rings stacked back-to-back. Interacts with the co-chaperonin GroES.

The protein localises to the cytoplasm. It carries out the reaction ATP + H2O + a folded polypeptide = ADP + phosphate + an unfolded polypeptide.. Functionally, together with its co-chaperonin GroES, plays an essential role in assisting protein folding. The GroEL-GroES system forms a nano-cage that allows encapsulation of the non-native substrate proteins and provides a physical environment optimized to promote and accelerate protein folding. The protein is Chaperonin GroEL of Bacillus cereus.